The sequence spans 218 residues: Oxidative stress regulator AosR (218 aa).

Positions 5 to 9 (CGRRC) match the CXXXC motif. Cysteines 5 and 9 form a disulfide.

It belongs to the AosR family. In terms of assembly, homodimer. Under oxidative stress, interacts with the extracytoplasmic-function (ECF) RNA polymerase sigma factor SigH.

With respect to regulation, activity is modulated by the formation of a disulfide bound within the N-terminal Cys-X-X-X-Cys (CXXXC) motif. This intramolecular disulfide bond is formed in response to oxidative stress, and results in oxidative stress-dependent interaction with the sigma factor SigH. Its function is as follows. Transcription factor crucial for intra-mycobacterial redox homeostasis and protection against host-derived oxidative and nitrosative radicals. In response to oxidative stress, interacts with the ECF sigma factor SigH and, in conjunction with SigH, binds to an auxiliary promoter upstream of mec-cysO-cysM, leading to the transcriptional activation of these genes encoding a non-canonical actinomycete-specific cysteine biosynthesis pathway. Increased transcription of mec-cysO-cysM results in enhanced production of L-cysteine and cysteine-derived antioxidant molecules. Increased production of cysteine protects mycobacteria cells from host phagocyte-derived oxidative and nitrosative stress, thus facilitating the mycobacterial growth in the host. This is Oxidative stress regulator AosR from Mycobacterium bovis (strain ATCC BAA-935 / AF2122/97).